The primary structure comprises 849 residues: Autoinducer 1 sensor kinase/phosphatase LuxN (849 aa).

7 consecutive transmembrane segments (helical) span residues 9–29 (IVYAKAISLLATVAVVMMWLF), 41–61 (VIFGTHHAAYIAYSVCIIAWI), 160–180 (SYFFIGLVSFVVLTLVNLVAM), 196–216 (IAGILVFMLSTAVIHLGMTYF), 220–242 (FSLTWLPPALSISEMLFVGYALL), 251–275 (YIAYLALSVLLVCAIFVLPLGAIFI), and 283–301 (WLIAIPICALIGITWQLLY). A Histidine kinase domain is found at 468 to 683 (SIAHEMRNPL…EFHLYFPVVP (216 aa)). Residue histidine 471 is modified to Phosphohistidine; by autocatalysis. In terms of domain architecture, Response regulatory spans 722–835 (TVLIVDDKEV…ALRHVLGNWL (114 aa)). Aspartate 771 is modified (4-aspartylphosphate).

It localises to the cell inner membrane. It carries out the reaction ATP + protein L-histidine = ADP + protein N-phospho-L-histidine.. In terms of biological role, at low cell density, in the absence of AI-1 (autoinducer 1), LuxN has a kinase activity and autophosphorylates on His-471. The phosphoryl group is then transferred on Asp-771 of the response regulator domain. The phosphoryl group is transferred to LuxU, and ultimately to LuxO. At high cell density, in the presence of AI-1, the kinase activity is inactivated, and the response regulator domain has a phosphatase activity. LuxN phosphatase acts on itself. As LuxU could function to establish an equilibrium between the aspartyl-phosphate of LuxN and the aspartyl-phosphate of LuxO, LuxU transfers phosphate from LuxO to LuxN and finally phosphate is drained from the system. This chain is Autoinducer 1 sensor kinase/phosphatase LuxN (luxN), found in Vibrio harveyi (Beneckea harveyi).